The chain runs to 431 residues: tRNA(Ile)-lysidine synthase (431 aa).

25–30 provides a ligand contact to ATP; that stretch reads SGGPDS.

This sequence belongs to the tRNA(Ile)-lysidine synthase family.

The protein localises to the cytoplasm. It carries out the reaction cytidine(34) in tRNA(Ile2) + L-lysine + ATP = lysidine(34) in tRNA(Ile2) + AMP + diphosphate + H(+). Its function is as follows. Ligates lysine onto the cytidine present at position 34 of the AUA codon-specific tRNA(Ile) that contains the anticodon CAU, in an ATP-dependent manner. Cytidine is converted to lysidine, thus changing the amino acid specificity of the tRNA from methionine to isoleucine. This chain is tRNA(Ile)-lysidine synthase, found in Lactobacillus johnsonii (strain CNCM I-12250 / La1 / NCC 533).